Here is a 509-residue protein sequence, read N- to C-terminus: Heat shock 70 kDa protein 14 (509 aa).

Belongs to the heat shock protein 70 family. Component of ribosome-associated complex (RAC), a heterodimer composed of Hsp70/DnaK-type chaperone HSPA14 and Hsp40/DnaJ-type chaperone DNAJC2.

It is found in the cytoplasm. The protein resides in the cytosol. Component of the ribosome-associated complex (RAC), a complex involved in folding or maintaining nascent polypeptides in a folding-competent state. In the RAC complex, binds to the nascent polypeptide chain, while DNAJC2 stimulates its ATPase activity. The polypeptide is Heat shock 70 kDa protein 14 (HSPA14) (Homo sapiens (Human)).